A 210-amino-acid chain; its full sequence is Outer-membrane lipoprotein LolB (210 aa).

The first 18 residues, 1–18 (MKKFTKILSLSTLLFLAG), serve as a signal peptide directing secretion. C19 carries N-palmitoyl cysteine lipidation. A lipid anchor (S-diacylglycerol cysteine) is attached at C19.

Belongs to the LolB family. As to quaternary structure, monomer.

It is found in the cell outer membrane. In terms of biological role, plays a critical role in the incorporation of lipoproteins in the outer membrane after they are released by the LolA protein. The polypeptide is Outer-membrane lipoprotein LolB (Actinobacillus pleuropneumoniae serotype 5b (strain L20)).